A 345-amino-acid chain; its full sequence is Viral Fc-gamma receptor-like protein UL119 (345 aa).

The N-terminal stretch at 1 to 23 (MCSVLAIALVVALLGDMHPGVKS) is a signal peptide. The disordered stretch occupies residues 23–43 (SSTTSAVTSPSNTTVTSTTSI). Topologically, residues 24-293 (STTSAVTSPS…IKSDPLFEDR (270 aa)) are virion surface. 12 N-linked (GlcNAc...) asparagine; by host glycosylation sites follow: Asn-34, Asn-48, Asn-95, Asn-104, Asn-148, Asn-179, Asn-198, Asn-217, Asn-225, Asn-241, Asn-244, and Asn-260. One can recognise an Ig-like V-type domain in the interval 91–190 (QVSLNATCKV…TWDLFTYPIY (100 aa)). Residues 294-314 (LLAYGVLAFLVFMVIILLYVT) traverse the membrane as a helical segment. Residues 315-345 (YMLARRRDWSYKRLEEPVEEKKHPVPYFKQW) lie on the Intravirion side of the membrane.

The protein localises to the virion membrane. Functionally, serves as a receptor for the Fc part of human IgG. May thus be involved in interfering with host Ig-mediated immune responses. This is Viral Fc-gamma receptor-like protein UL119 (UL119/UL118) from Homo sapiens (Human).